The sequence spans 333 residues: Ketol-acid reductoisomerase (NADP(+)) (333 aa).

A KARI N-terminal Rossmann domain is found at 1 to 171 (MSNDTQPTIA…GGARANIIKT (171 aa)). Residues 14-17 (YGSQ), Arg-37, Thr-42, and 72-75 (DMVQ) each bind NADP(+). Residue His-97 is part of the active site. Gly-123 serves as a coordination point for NADP(+). Positions 172 to 317 (TFKEETETDL…KKLRAKMVWL (146 aa)) constitute a KARI C-terminal knotted domain. Mg(2+) is bound by residues Asp-180, Glu-184, Glu-216, and Glu-220. Residue Ser-241 participates in substrate binding.

This sequence belongs to the ketol-acid reductoisomerase family. Mg(2+) serves as cofactor.

It carries out the reaction (2R)-2,3-dihydroxy-3-methylbutanoate + NADP(+) = (2S)-2-acetolactate + NADPH + H(+). The catalysed reaction is (2R,3R)-2,3-dihydroxy-3-methylpentanoate + NADP(+) = (S)-2-ethyl-2-hydroxy-3-oxobutanoate + NADPH + H(+). It participates in amino-acid biosynthesis; L-isoleucine biosynthesis; L-isoleucine from 2-oxobutanoate: step 2/4. It functions in the pathway amino-acid biosynthesis; L-valine biosynthesis; L-valine from pyruvate: step 2/4. Functionally, involved in the biosynthesis of branched-chain amino acids (BCAA). Catalyzes an alkyl-migration followed by a ketol-acid reduction of (S)-2-acetolactate (S2AL) to yield (R)-2,3-dihydroxy-isovalerate. In the isomerase reaction, S2AL is rearranged via a Mg-dependent methyl migration to produce 3-hydroxy-3-methyl-2-ketobutyrate (HMKB). In the reductase reaction, this 2-ketoacid undergoes a metal-dependent reduction by NADPH to yield (R)-2,3-dihydroxy-isovalerate. In Xanthomonas campestris pv. campestris (strain 8004), this protein is Ketol-acid reductoisomerase (NADP(+)).